The sequence spans 527 residues: MRLRNFYSALALSAAVFAGPLYAAAPAMAAGTISGGFDVGPGGFQGNFNPLAATGGFTWLVTYFEPLVIYDDKLENIVGDLAKSFEISPDQLTYTFKLAHAKWHDGEPFTSKDAKFTFDLARNGKTGSVFAARLASIASVETPDEKTVVIKLKEPSPSMLDTLTKVMMLPEHALASIPPEQLAKNAWWSSTPIGTGPFKFNKYVADQYVELTANPDYRGGRPQVDKLINRYFADPAAAIAALRSGEIQFTYVDSNDVSTFSSDSAFRVIEGDSFVVNYVGFNQEVPLWKDLKVRQAFMHAINRDAIIQSLYGGAAKPANCVYVADRLVPKAIDAYAYDPQKARQLLDEAGWDKINGSKPITILTYYNSPLVANVLAAMQAMLAQVGINIVPRTVDTPTYNSIVYKQGGTADEFPLIFAGLQNGPDPSSINIGLNEKQIPPAGSNIMRIRMPAVTKALDAALAETNPAKRDARYQDVCKATNANLPWGTMWVANRYGVASSKLENFIWTPAPAGGPYQAHPEKWAILE.

A signal peptide spans 1–23; sequence MRLRNFYSALALSAAVFAGPLYA.

The protein belongs to the bacterial solute-binding protein 5 family. As to quaternary structure, the complex is composed of two ATP-binding proteins (BOV_A0347 and BOV_A0348), two transmembrane proteins (BOV_A0350 and BOV_A0351) and a solute-binding protein (BOV_A0352).

It is found in the periplasm. In terms of biological role, probably part of an ABC transporter complex that could be involved in peptide import. The protein is Putative ABC transporter peptide-binding protein BOV_A0352 of Brucella ovis (strain ATCC 25840 / 63/290 / NCTC 10512).